The following is a 337-amino-acid chain: Lipoate-protein ligase A (337 aa).

One can recognise a BPL/LPL catalytic domain in the interval 29-216 (DQNQTILFLW…AFFNYYQTTV (188 aa)). ATP-binding positions include Arg-71, 76-79 (GAVF), and Lys-134. Lys-134 contacts (R)-lipoate.

Belongs to the LplA family. As to quaternary structure, monomer.

The protein resides in the cytoplasm. It carries out the reaction L-lysyl-[lipoyl-carrier protein] + (R)-lipoate + ATP = N(6)-[(R)-lipoyl]-L-lysyl-[lipoyl-carrier protein] + AMP + diphosphate + H(+). It participates in protein modification; protein lipoylation via exogenous pathway; protein N(6)-(lipoyl)lysine from lipoate: step 1/2. Its pathway is protein modification; protein lipoylation via exogenous pathway; protein N(6)-(lipoyl)lysine from lipoate: step 2/2. In terms of biological role, catalyzes both the ATP-dependent activation of exogenously supplied lipoate to lipoyl-AMP and the transfer of the activated lipoyl onto the lipoyl domains of lipoate-dependent enzymes. The chain is Lipoate-protein ligase A from Blochmanniella floridana.